The sequence spans 284 residues: Proline-rich protein 32 (284 aa).

Disordered regions lie at residues 59-80, 97-119, and 143-171; these read RPPF…APRH, EINS…NMSQ, and SGNN…RGPP.

In Mus musculus (Mouse), this protein is Proline-rich protein 32 (Prr32).